The primary structure comprises 332 residues: Nucleoid-associated protein VVA0877 (332 aa).

It belongs to the YejK family.

It localises to the cytoplasm. The protein resides in the nucleoid. This is Nucleoid-associated protein VVA0877 from Vibrio vulnificus (strain YJ016).